The chain runs to 266 residues: Tryptophan synthase alpha chain (266 aa).

Active-site proton acceptor residues include E49 and D60.

This sequence belongs to the TrpA family. In terms of assembly, tetramer of two alpha and two beta chains.

The catalysed reaction is (1S,2R)-1-C-(indol-3-yl)glycerol 3-phosphate + L-serine = D-glyceraldehyde 3-phosphate + L-tryptophan + H2O. The protein operates within amino-acid biosynthesis; L-tryptophan biosynthesis; L-tryptophan from chorismate: step 5/5. The alpha subunit is responsible for the aldol cleavage of indoleglycerol phosphate to indole and glyceraldehyde 3-phosphate. This is Tryptophan synthase alpha chain from Shewanella amazonensis (strain ATCC BAA-1098 / SB2B).